Reading from the N-terminus, the 101-residue chain is uncharacterized protein (101 aa).

The disordered stretch occupies residues cysteine 39–glutamate 74. The segment covering serine 50 to serine 60 has biased composition (polar residues).

This is an uncharacterized protein from Homo sapiens (Human).